The following is an 87-amino-acid chain: U9-ctenitoxin-Pn1a (87 aa).

The signal sequence occupies residues 1 to 22 (MWLKTQLFVLAIAVIALLEVHA). Positions 23-37 (EPESNDNNELVVEEA) are excised as a propeptide. 4 cysteine pairs are disulfide-bonded: cysteine 40–cysteine 54, cysteine 47–cysteine 64, cysteine 53–cysteine 73, and cysteine 66–cysteine 71. Positions 75–87 (KSLREMAAAAFGR) are excised as a propeptide.

The protein belongs to the neurotoxin 02 (plectoxin) family. 01 (Tx3) subfamily. As to expression, expressed by the venom gland.

Its subcellular location is the secreted. In terms of biological role, antagonist of L-type calcium channels (Cav1/CACNA1). This Phoneutria nigriventer (Brazilian armed spider) protein is U9-ctenitoxin-Pn1a.